A 365-amino-acid chain; its full sequence is P2Y purinoceptor 4 (365 aa).

The Extracellular segment spans residues 1–34 (MASTESSLLRSLGLSPGPGSSEVELDCWFDEDFK). A helical membrane pass occupies residues 35–61 (FILLPVSYAVVFVLGLGLNAPTLWLFI). Over 62 to 72 (FRLRPWDATAT) the chain is Cytoplasmic. A helical transmembrane segment spans residues 73-95 (YMFHLALSDTLYVLSLPTLIYYY). Residues 96–112 (AAHNHWPFGTEICKFVR) are Extracellular-facing. An intrachain disulfide couples Cys-108 to Cys-185. Residues 113-131 (FLFYWNLYCSVLFLTCISV) traverse the membrane as a helical segment. Residues 132-154 (HRYLGICHPLRALRWGRPRLAGL) lie on the Cytoplasmic side of the membrane. A helical transmembrane segment spans residues 155–174 (LCLAVWLVVAGCLVPNLFFV). Topologically, residues 175-196 (TTSNKGTTVLCHDTTRPEEFDH) are extracellular. A helical transmembrane segment spans residues 197–222 (YVHFSSAVMGLLFGVPCLVTLVCYGL). Residues 223–246 (MARRLYQPLPGSAQSSSRLRSLRT) are Cytoplasmic-facing. The chain crosses the membrane as a helical span at residues 247-269 (IAVVLTVFAVCFVPFHITRTIYY). At 270-287 (LARLLEADCRVLNIVNVV) the chain is on the extracellular side. Residues 288-309 (YKVTRPLASANSCLDPVLYLLT) form a helical membrane-spanning segment. Over 310 to 365 (GDKYRRQLRQLCGGGKPQPRTAASSLALVSLPEDSSCRWAATPQDSSCSTPRADRL) the chain is Cytoplasmic. Phosphoserine is present on residues Ser-333 and Ser-334.

It belongs to the G-protein coupled receptor 1 family. Phosphorylation of Ser-333 and Ser-334 is a key step in agonist-dependent desensitization and loss of surface P2RY4. This phosphorylation does not involve PKC, nor other calcium activated kinases. As to expression, pancreas.

It is found in the cell membrane. In terms of biological role, receptor for UTP and UDP coupled to G-proteins that activate a phosphatidylinositol-calcium second messenger system. Not activated by ATP or ADP. This Homo sapiens (Human) protein is P2Y purinoceptor 4 (P2RY4).